Consider the following 426-residue polypeptide: Histidine--tRNA ligase (426 aa).

The protein belongs to the class-II aminoacyl-tRNA synthetase family. As to quaternary structure, homodimer.

It is found in the cytoplasm. It catalyses the reaction tRNA(His) + L-histidine + ATP = L-histidyl-tRNA(His) + AMP + diphosphate + H(+). The sequence is that of Histidine--tRNA ligase from Streptococcus pyogenes serotype M49 (strain NZ131).